Consider the following 548-residue polypeptide: DNA ligase (548 aa).

Glu244 contacts ATP. Lys246 serves as the catalytic N6-AMP-lysine intermediate. Arg251, Arg266, Glu295, Phe334, Arg405, and Lys411 together coordinate ATP.

The protein belongs to the ATP-dependent DNA ligase family. Requires Mg(2+) as cofactor.

The catalysed reaction is ATP + (deoxyribonucleotide)n-3'-hydroxyl + 5'-phospho-(deoxyribonucleotide)m = (deoxyribonucleotide)n+m + AMP + diphosphate.. Its function is as follows. DNA ligase that seals nicks in double-stranded DNA during DNA replication, DNA recombination and DNA repair. The protein is DNA ligase of Methanoculleus marisnigri (strain ATCC 35101 / DSM 1498 / JR1).